A 426-amino-acid chain; its full sequence is Enolase (426 aa).

Residue glutamine 163 participates in (2R)-2-phosphoglycerate binding. Glutamate 205 acts as the Proton donor in catalysis. Mg(2+) contacts are provided by aspartate 242, glutamate 283, and aspartate 310. Lysine 335, arginine 364, serine 365, and lysine 386 together coordinate (2R)-2-phosphoglycerate. Catalysis depends on lysine 335, which acts as the Proton acceptor.

The protein belongs to the enolase family. Requires Mg(2+) as cofactor.

It localises to the cytoplasm. The protein resides in the secreted. The protein localises to the cell surface. The enzyme catalyses (2R)-2-phosphoglycerate = phosphoenolpyruvate + H2O. It participates in carbohydrate degradation; glycolysis; pyruvate from D-glyceraldehyde 3-phosphate: step 4/5. Its function is as follows. Catalyzes the reversible conversion of 2-phosphoglycerate (2-PG) into phosphoenolpyruvate (PEP). It is essential for the degradation of carbohydrates via glycolysis. In Aquifex aeolicus (strain VF5), this protein is Enolase.